Here is a 725-residue protein sequence, read N- to C-terminus: Ribonucleoside-diphosphate reductase subunit alpha (725 aa).

Substrate contacts are provided by residues Thr172, 188 to 189 (SC), Gly217, 397 to 401 (NLCSE), and 599 to 603 (PTGSI). An intrachain disulfide couples Cys189 to Cys426. The active-site Proton acceptor is the Asn397. Catalysis depends on Cys399, which acts as the Cysteine radical intermediate. Glu401 serves as the catalytic Proton acceptor.

The protein belongs to the ribonucleoside diphosphate reductase large chain family. As to quaternary structure, tetramer of two alpha and two beta subunits. Co-immunoprecipitates with DarG in the presence and absence of darT.

It catalyses the reaction a 2'-deoxyribonucleoside 5'-diphosphate + [thioredoxin]-disulfide + H2O = a ribonucleoside 5'-diphosphate + [thioredoxin]-dithiol. Its activity is regulated as follows. Under complex allosteric control mediated by deoxynucleoside triphosphates and ATP binding. The type of nucleotide bound at the specificity site determines substrate preference. It seems probable that ATP makes the enzyme reduce CDP and UDP, dGTP favors ADP reduction and dTTP favors GDP reduction. CDP reduction is stimulated by dATP. Provides the precursors necessary for DNA synthesis. Catalyzes the biosynthesis of deoxyribonucleotides from the corresponding ribonucleotides. When coexpressed in E.coli with nrdF2 the 2 proteins complement a temperature-sensitive E.coli mutant, however coexpression with nrdF1 does not complement. The sequence is that of Ribonucleoside-diphosphate reductase subunit alpha (nrdE) from Mycobacterium tuberculosis (strain ATCC 25618 / H37Rv).